A 932-amino-acid polypeptide reads, in one-letter code: Probable UDP-N-acetylglucosamine--peptide N-acetylglucosaminyltransferase SPINDLY (932 aa).

Over residues 1–15 (MAWTEKDVENGKESD) the composition is skewed to basic and acidic residues. The interval 1–39 (MAWTEKDVENGKESDSLGNNGFLKGVQSSSDSKGSPVRI) is disordered. 11 TPR repeats span residues 48-81 (GKDA…DSGS), 82-115 (IESL…DPQN), 116-149 (ACAL…DPSY), 157-190 (AIVL…DSHY), 191-224 (APAY…RPMY), 225-258 (AEAY…SPNF), 266-299 (AIAL…NWHY), 300-333 (ADAM…NPHC), 334-367 (AEAC…KPNF), 369-401 (QSLN…NPTY), and 402-435 (AEAY…DPDS). Residues 436-932 (RNAGQNRLLA…NQAGNPGKQS (497 aa)) form a catalytic region region. The interval 881-902 (VSPIEKTRISASKDGPIKENGF) is disordered.

Belongs to the glycosyltransferase 41 family. O-GlcNAc transferase subfamily. As to expression, expressed in stems, leaves and flowers. Expressed during all stages of corolla maturation.

It localises to the nucleus. It carries out the reaction L-seryl-[protein] + UDP-N-acetyl-alpha-D-glucosamine = 3-O-(N-acetyl-beta-D-glucosaminyl)-L-seryl-[protein] + UDP + H(+). The enzyme catalyses L-threonyl-[protein] + UDP-N-acetyl-alpha-D-glucosamine = 3-O-(N-acetyl-beta-D-glucosaminyl)-L-threonyl-[protein] + UDP + H(+). The protein operates within protein modification; protein glycosylation. In terms of biological role, probable O-linked N-acetylglucosamine transferase (OGT) involved in various processes such as gibberellin (GA) signaling pathway. OGTs catalyze the addition of nucleotide-activated sugars directly onto the polypeptide through O-glycosidic linkage with the hydroxyl of serine or threonine. Probably acts by adding O-linked sugars to yet unknown proteins. This chain is Probable UDP-N-acetylglucosamine--peptide N-acetylglucosaminyltransferase SPINDLY (SPY), found in Petunia hybrida (Petunia).